The sequence spans 750 residues: Protein psiO (750 aa).

The N-terminal stretch at 1–22 is a signal peptide; sequence MKEKIKLSLLILTSIILAVANS. At 23-688 the chain is on the extracellular side; that stretch reads QTQPKTLAMT…GCNTAAVVST (666 aa). A glycan (N-linked (GlcNAc...) asparagine) is linked at N129. The 147-residue stretch at 140–286 folds into the PA14 domain; that stretch reads QEYFPINGKG…DDYCGVCNGD (147 aa). 5 N-linked (GlcNAc...) asparagine glycosylation sites follow: N447, N506, N554, N571, and N659. A helical transmembrane segment spans residues 689-709; it reads AVIAGVTVAAVVGLGIFLYGG. Residues 710–750 lie on the Cytoplasmic side of the membrane; it reads KKGYDYYQDNKSKGMTGANSNPLYKESGNAGQNPLYNDNNL. The disordered stretch occupies residues 727 to 750; the sequence is ANSNPLYKESGNAGQNPLYNDNNL. A compositionally biased stretch (polar residues) spans 738 to 750; sequence NAGQNPLYNDNNL.

Belongs to the prespore-cell-inducing factor family.

It localises to the membrane. The polypeptide is Protein psiO (psiO) (Dictyostelium discoideum (Social amoeba)).